Here is a 211-residue protein sequence, read N- to C-terminus: MADAFSLQRVLETFRSSLSENKEVYIKYYIAGWQELVSFMNSLGNVFSFISKDVVSKIQILENFLSGENGSNYVTIQSMVKYELENDLVDLTKRGSHPESGCRTLLRLHRALRWLELFLERLRTSTEDSKTSVMCSDAYNESLANHHPWLIRKAVGVAFCALPGRETFFDVMNAGDHTQVVALLGESLPLIAEVYQITEDLYAKNNLLELP.

Positions 53, 57, 103, 107, and 147 each coordinate an N-acylsphingoid base 1-phosphate.

The protein belongs to the GLTP family.

It is found in the cytoplasm. The protein resides in the cytosol. The protein localises to the golgi apparatus. Its subcellular location is the trans-Golgi network membrane. It localises to the cell membrane. It is found in the endosome membrane. The protein resides in the nucleus outer membrane. It carries out the reaction N-(hexadecanoyl)-sphing-4-enine-1-phosphate(in) = N-(hexadecanoyl)-sphing-4-enine-1-phosphate(out). The enzyme catalyses N-(9Z-octadecenoyl)-sphing-4-enine-1-phosphate(in) = N-(9Z-octadecenoyl)-sphing-4-enine-1-phosphate(out). In terms of biological role, mediates the intracellular transfer of ceramide-1-phosphate (C1P) between organelle membranes and the cell membrane. Required for normal structure of the Golgi stacks. Can bind phosphoceramides with a variety of aliphatic chains, but has a preference for lipids with saturated C16:0 or monounsaturated C18:1 aliphatic chains, and is inefficient with phosphoceramides containing lignoceryl (C24:0). Plays a role in the regulation of the cellular levels of ceramide-1-phosphate, and thereby contributes to the regulation of phospholipase PLA2G4A activity and the release of arachidonic acid. Has no activity with galactosylceramide, lactosylceramide, sphingomyelin, phosphatidylcholine, phosphatidic acid and ceramide. C1P transfer is stimulated by phosphatidylserine in C1P source vesicles. Regulates autophagy and pyroptosis, but not apoptosis. The chain is Ceramide-1-phosphate transfer protein (cptp) from Danio rerio (Zebrafish).